We begin with the raw amino-acid sequence, 679 residues long: Methionine--tRNA ligase (679 aa).

Residues 14 to 24 (PYANGSIHLGH) carry the 'HIGH' region motif. Zn(2+)-binding residues include cysteine 145, cysteine 148, cysteine 158, and cysteine 161. The 'KMSKS' region signature appears at 331 to 335 (KMSKS). Lysine 334 serves as a coordination point for ATP. Residues 577–679 (TFAAVDLRVA…SGAKPGQRIK (103 aa)) enclose the tRNA-binding domain.

The protein belongs to the class-I aminoacyl-tRNA synthetase family. MetG type 1 subfamily. Homodimer. Zn(2+) serves as cofactor.

The protein localises to the cytoplasm. The catalysed reaction is tRNA(Met) + L-methionine + ATP = L-methionyl-tRNA(Met) + AMP + diphosphate. Is required not only for elongation of protein synthesis but also for the initiation of all mRNA translation through initiator tRNA(fMet) aminoacylation. In Pseudomonas entomophila (strain L48), this protein is Methionine--tRNA ligase.